Consider the following 447-residue polypeptide: Vasoactive intestinal polypeptide receptor (447 aa).

At 1 to 103 (MCDVVNEIEL…VDDDSFFRSV (103 aa)) the chain is on the extracellular side. 3 disulfides stabilise this stretch: Cys15–Cys36, Cys27–Cys69, and Cys50–Cys86. N-linked (GlcNAc...) asparagine glycosylation is found at Asn17, Asn22, Asn64, and Asn91. The helical transmembrane segment at 104 to 128 (KIGYTIGHSVSLISLTTAIVILCMS) threads the bilayer. Topologically, residues 129–135 (RKLHCTR) are cytoplasmic. The helical transmembrane segment at 136-155 (NYIHMHLFVSFILKAIAVFV) threads the bilayer. Over 156-178 (KDAVLYDVIQESDNCSTASVGCK) the chain is Extracellular. Residue Asn169 is glycosylated (N-linked (GlcNAc...) asparagine). A disulfide bridge links Cys177 with Cys247. A helical membrane pass occupies residues 179–202 (AVIVFFQYCIMASFFWLLVEGLYL). Topologically, residues 203–216 (HALLAVSFFSERKY) are cytoplasmic. Residues 217-238 (FWWYILIGWGGPTIFIMAWSFA) traverse the membrane as a helical segment. Topologically, residues 239 to 256 (KAYFNDVGCWDIIENSDL) are extracellular. A helical membrane pass occupies residues 257 to 280 (FWWIIKTPILASILMNFILFICII). Residues 281–305 (RILRQKINCPDIGRNESNQYSRLAK) lie on the Cytoplasmic side of the membrane. Residues 306-325 (STLLLIPLFGINFIIFAFIP) traverse the membrane as a helical segment. The Extracellular segment spans residues 326-337 (ENIKTELRLVFD). Residues 338–357 (LILGSFQGFVVAVLYCFLNG) form a helical membrane-spanning segment. Residues 358 to 447 (EVQAEIKRKW…KGHEDVREVS (90 aa)) lie on the Cytoplasmic side of the membrane.

Belongs to the G-protein coupled receptor 2 family.

The protein localises to the cell membrane. This is a receptor for VIP. The activity of this receptor is mediated by G proteins which activate adenylyl cyclase. This is Vasoactive intestinal polypeptide receptor (vipr1) from Carassius auratus (Goldfish).